The following is a 237-amino-acid chain: MVHLRKSLAPYWWPIPRKAGGVWAVRPSTGPHSLEYSLPLAVVVRDVLRYAKTLREARYIISRGYIKVDGVVRKDYKFPIGLMDVVEIVPTGEIYRVVPDEAKYYDLKPIPSSEAALKPLRVEGKTAVSGGRIQLHFHDGRNLILPPDVGRQIKTFDTVVYDLENKAIKTHLPLRLGQLAVVTHGGNIGFVGQFFEVVWTLKRRQSVVALRKGEEVRRTILDYIMVIGTEAPVVKIS.

The S4 RNA-binding domain occupies 38 to 110 (LPLAVVVRDV…EAKYYDLKPI (73 aa)).

It belongs to the eukaryotic ribosomal protein eS4 family.

This Pyrobaculum calidifontis (strain DSM 21063 / JCM 11548 / VA1) protein is Small ribosomal subunit protein eS4.